A 207-amino-acid polypeptide reads, in one-letter code: Nitrile hydratase subunit alpha (207 aa).

The Fe(3+) site is built by cysteine 110, cysteine 113, serine 114, and cysteine 115. A Cysteine sulfinic acid (-SO2H) modification is found at cysteine 113. Cysteine 115 bears the Cysteine sulfenic acid (-SOH) mark.

It belongs to the nitrile hydratase subunit alpha family. As to quaternary structure, heterodimer of an alpha and a beta chain. Fe(3+) serves as cofactor. Oxidation on Cys-113 is essential for the activity. Post-translationally, oxidation on Cys-115 stabilizes the Fe-NO ligand coordinated in the inactive form.

The catalysed reaction is an aliphatic primary amide = an aliphatic nitrile + H2O. Its activity is regulated as follows. Inactivated by nitrosylation of the iron center in the dark and activated by photo-induced nitric oxide (NO) release. Inactivated by oxidation of Cys-115 to a sulfenic acid. Functionally, NHase catalyzes the hydration of various nitrile compounds to the corresponding amides. Industrial production of acrylamide is now being developed using some of the enzymes of this class. The chain is Nitrile hydratase subunit alpha (nthA) from Rhodococcus erythropolis (Arthrobacter picolinophilus).